Here is a 176-residue protein sequence, read N- to C-terminus: Ribosome maturation factor RimM (176 aa).

One can recognise a PRC barrel domain in the interval 93-166 (EGEYYHADLI…RVVIEMPGEI (74 aa)).

It belongs to the RimM family. As to quaternary structure, binds ribosomal protein uS19.

The protein localises to the cytoplasm. Functionally, an accessory protein needed during the final step in the assembly of 30S ribosomal subunit, possibly for assembly of the head region. Essential for efficient processing of 16S rRNA. May be needed both before and after RbfA during the maturation of 16S rRNA. It has affinity for free ribosomal 30S subunits but not for 70S ribosomes. The chain is Ribosome maturation factor RimM from Rhodopseudomonas palustris (strain BisA53).